A 127-amino-acid polypeptide reads, in one-letter code: DNA-directed RNA polymerase subunit omega (127 aa).

The protein belongs to the RNA polymerase subunit omega family. In terms of assembly, the RNAP catalytic core consists of 2 alpha, 1 beta, 1 beta' and 1 omega subunit. When a sigma factor is associated with the core the holoenzyme is formed, which can initiate transcription.

The catalysed reaction is RNA(n) + a ribonucleoside 5'-triphosphate = RNA(n+1) + diphosphate. In terms of biological role, promotes RNA polymerase assembly. Latches the N- and C-terminal regions of the beta' subunit thereby facilitating its interaction with the beta and alpha subunits. The sequence is that of DNA-directed RNA polymerase subunit omega (rpoZ) from Rickettsia prowazekii (strain Madrid E).